The following is a 225-amino-acid chain: uncharacterized protein (225 aa).

The interval 32-82 (PKDKKKQNDTENKKKQPKDGENDKQKEQAETQPFEWIQQKDADDKKESNTA) is disordered. Composition is skewed to basic and acidic residues over residues 37–60 (KQNDTENKKKQPKDGENDKQKEQA) and 69–79 (QQKDADDKKES).

The protein belongs to the MG067/MG068/MG395 family.

This is an uncharacterized protein from Mycoplasma pneumoniae (strain ATCC 29342 / M129 / Subtype 1) (Mycoplasmoides pneumoniae).